The primary structure comprises 408 residues: UDP-N-acetylglucosamine--dolichyl-phosphate N-acetylglucosaminephosphotransferase (408 aa).

2 helical membrane-spanning segments follow: residues 6 to 26 and 32 to 52; these read SLLG…IYLP and WIIV…YKLI. The UDP-N-acetyl-alpha-D-glucosamine site is built by Asp68 and Glu84. Transmembrane regions (helical) follow at residues 87 to 107 and 120 to 140; these read GICV…FQWF and AALT…VLNL. Dolichyl phosphate is bound at residue Lys145. 2 helical membrane passes run 147-167 and 181-201; these read ILPM…TTVV and LGVV…LAIF. 200–208 lines the dolichyl phosphate pocket; the sequence is IFCTNSINI. Asn207 contributes to the Mg(2+) binding site. Asn213 provides a ligand contact to UDP-N-acetyl-alpha-D-glucosamine. The next 2 membrane-spanning stretches (helical) occupy residues 221-241 and 258-278; these read VVIA…ASSV and HLFS…LLFY. Residue Asp289 coordinates Mg(2+). Residues 297 to 317 form a helical membrane-spanning segment; that stretch reads MCFAVVAILCHFSKTLLLFFI. 338–340 serves as a coordination point for UDP-N-acetyl-alpha-D-glucosamine; it reads RHR. The next 2 helical transmembrane spans lie at 351–371 and 376–396; these read MEAI…TGPL and LCVY…GIRY.

The protein belongs to the glycosyltransferase 4 family. In terms of assembly, homodimer. Mg(2+) serves as cofactor.

The protein resides in the endoplasmic reticulum membrane. The catalysed reaction is a di-trans,poly-cis-dolichyl phosphate + UDP-N-acetyl-alpha-D-glucosamine = an N-acetyl-alpha-D-glucosaminyl-diphospho-di-trans,poly-cis-dolichol + UMP. It functions in the pathway protein modification; protein glycosylation. With respect to regulation, inhibited by natural nucleoside antibiotic tunicamycin, which acts as a structural analog and competitor of UDP-GlcNAc. Functionally, UDP-N-acetylglucosamine--dolichyl-phosphate N-acetylglucosaminephosphotransferase that operates in the biosynthetic pathway of dolichol-linked oligosaccharides, the glycan precursors employed in protein asparagine (N)-glycosylation. The assembly of dolichol-linked oligosaccharides begins on the cytosolic side of the endoplasmic reticulum membrane and finishes in its lumen. The sequential addition of sugars to dolichol pyrophosphate produces dolichol-linked oligosaccharides containing fourteen sugars, including two GlcNAcs, nine mannoses and three glucoses. Once assembled, the oligosaccharide is transferred from the lipid to nascent proteins by oligosaccharyltransferases. Catalyzes the initial step of dolichol-linked oligosaccharide biosynthesis, transfering GlcNAc-1-P from cytosolic UDP-GlcNAc onto the carrier lipid dolichyl phosphate (P-dolichol), yielding GlcNAc-P-P-dolichol embedded in the cytoplasmic leaflet of the endoplasmic reticulum membrane. This Dictyostelium discoideum (Social amoeba) protein is UDP-N-acetylglucosamine--dolichyl-phosphate N-acetylglucosaminephosphotransferase (alg7).